The sequence spans 443 residues: Exodeoxyribonuclease 7 large subunit (443 aa).

Belongs to the XseA family. In terms of assembly, heterooligomer composed of large and small subunits.

Its subcellular location is the cytoplasm. The enzyme catalyses Exonucleolytic cleavage in either 5'- to 3'- or 3'- to 5'-direction to yield nucleoside 5'-phosphates.. Bidirectionally degrades single-stranded DNA into large acid-insoluble oligonucleotides, which are then degraded further into small acid-soluble oligonucleotides. This is Exodeoxyribonuclease 7 large subunit from Legionella pneumophila (strain Lens).